An 848-amino-acid chain; its full sequence is ATP-dependent Clp protease ATP-binding subunit ClpC1 (848 aa).

The 143-residue stretch at 2-144 (FERFTDRARR…RQQVIQLLSG (143 aa)) folds into the Clp R domain. Repeat regions lie at residues 5 to 70 (FTDR…IGQG) and 80 to 144 (FTPR…LLSG). The 36-residue stretch at 425–460 (DEKIADARREKESAIDAQDFEKAAALRDKEKQLVAQ) folds into the UVR domain. ATP-binding positions include 553–560 (GPSGVGKT) and 617–626 (KPFSVVLFDE). A disordered region spans residues 811-848 (GQGEDAKFTFSGGPKRAETAEPDLAGAGAAGAPTAGTE). Residues 835-848 (AGAGAAGAPTAGTE) are compositionally biased toward low complexity.

The protein belongs to the ClpA/ClpB family. ClpC subfamily.

Functionally, ATP-dependent specificity component of the Clp protease. It directs the protease to specific substrates. Can perform chaperone functions in the absence of ClpP. Degrades anti-sigma-E factor RseA in the presence of ClpP2. The sequence is that of ATP-dependent Clp protease ATP-binding subunit ClpC1 (clpC1) from Mycolicibacterium smegmatis (strain ATCC 700084 / mc(2)155) (Mycobacterium smegmatis).